A 544-amino-acid polypeptide reads, in one-letter code: FVLNYLNTTTIAFISLISLLFFLFRFSKVSHTKEPPIISGSWPLLGHLPLMRNTQTPHKTLGALVDKYGPIFTIKLGATNALVLSNWELAKECFTKNDIVVSSRPKPVAVELMSYNQAFIGWAPYGAYWRQLRKIVTLEILSNRRIELLSHIRVSEVQTSIKELVNVWSNQISSQYGLLDDTKSSSTNDEPSTTDYVSVELKKWFAQLTLNMVLRMVVGKRCFGDVDVENKEEAKRFLENIRDFMRLIGTFTVGDGVPFLKWLDLGGHEKEMKKCAKKFDVMLNEWLEEHREKKGLGSEDKVVGERDFMDAMLLVLKDKPIEGFDVDTIIKATTLELILGGSDTTAGTLTWAMCLLLKHPHVLEKLKEELNTYIGKERCVNESDINKLVYLHAIIKETLRLYPPAPFSSPREFTEDCTIGGYHIKKGTRLMPNLWKIHRDPSVWPDPLEFKPERFLSTHKDVDVRGQNFELLPFGSGRRMCAGMSLGLHMVHYILANFLHSFEILNPSPESIDVTEVLEFVTTKATPLEVLVKPCLSFKCYESM.

C481 contributes to the heme binding site.

This sequence belongs to the cytochrome P450 family. Heme serves as cofactor.

It is found in the membrane. The sequence is that of Cytochrome P450 82A1 (CYP82A1) from Pisum sativum (Garden pea).